The chain runs to 209 residues: D-aminoacyl-tRNA deacylase 1 (209 aa).

The short motif at 139 to 140 (GP) is the Gly-cisPro motif, important for rejection of L-amino acids element. A disordered region spans residues 142–209 (TIELESPAPG…EGDVSSEREP (68 aa)). Composition is skewed to basic and acidic residues over residues 159 to 170 (QLSKLEKQQQRK) and 181 to 194 (SSKE…EDRS). A phosphoserine mark is found at S197, S204, and S205.

This sequence belongs to the DTD family. Homodimer. Interacts with CDC45 and TOPBP1. Post-translationally, preferentially phosphorylated in cells arrested early in S phase. Phosphorylation in the C-terminus weakens the interaction with CDC45.

Its subcellular location is the nucleus. It localises to the cytoplasm. It catalyses the reaction glycyl-tRNA(Ala) + H2O = tRNA(Ala) + glycine + H(+). The enzyme catalyses a D-aminoacyl-tRNA + H2O = a tRNA + a D-alpha-amino acid + H(+). In terms of biological role, an aminoacyl-tRNA editing enzyme that deacylates mischarged D-aminoacyl-tRNAs. Also deacylates mischarged glycyl-tRNA(Ala), protecting cells against glycine mischarging by AlaRS. Acts via tRNA-based rather than protein-based catalysis; rejects L-amino acids rather than detecting D-amino acids in the active site. By recycling D-aminoacyl-tRNA to D-amino acids and free tRNA molecules, this enzyme counteracts the toxicity associated with the formation of D-aminoacyl-tRNA entities in vivo and helps enforce protein L-homochirality. Its function is as follows. ATPase involved in DNA replication, may facilitate loading of CDC45 onto pre-replication complexes. The sequence is that of D-aminoacyl-tRNA deacylase 1 (Dtd1) from Mus musculus (Mouse).